A 250-amino-acid polypeptide reads, in one-letter code: 2,3-bisphosphoglycerate-dependent phosphoglycerate mutase (250 aa).

Residues Arg-10, His-11, Asn-17, Gly-24, Arg-62, Glu-89, Tyr-92, Lys-100, Arg-116, Arg-117, His-184, Gly-185, and Asn-186 each coordinate (2R)-2,3-bisphosphoglycerate. Residue His-11 is the Tele-phosphohistidine intermediate of the active site. Gly-24 is a binding site for (2R)-3-phosphoglycerate. Positions 89, 92, 100, 116, and 117 each coordinate (2R)-3-phosphoglycerate. Catalysis depends on Glu-89, which acts as the Proton donor/acceptor. Asn-186 lines the (2R)-3-phosphoglycerate pocket.

Belongs to the phosphoglycerate mutase family. BPG-dependent PGAM subfamily. Ubiquitously expressed with the highest expression in the sub-tegumental muscle layer (at protein level). Expressed in the tegument (at protein level).

The protein resides in the tegument. The enzyme catalyses (2R)-2-phosphoglycerate = (2R)-3-phosphoglycerate. The protein operates within carbohydrate degradation; glycolysis; pyruvate from D-glyceraldehyde 3-phosphate: step 3/5. With respect to regulation, strongly activated by 2,3-bisphosphoglycerate (2,3-BPG). Inhibited by vanadate in a dose-dependent manner. Catalyzes interconversion of 3- and 2-phosphoglycerate with 2,3-bisphosphoglycerate (2,3-BPG) as the primer of the reaction. Schistosomula have significant surface phosphoglycerate mutase activity also without 2,3-BPG. Binds human plasminogen and enhances its conversion to active thrombolytic plasmin in the presence of human tissue plasminogen activator (tPA) in vitro. Host-interactive surface protein, which may degrade vascular blood clots surrounding the worm in vivo and thus may help survival of the parasite in its host microenvironment. This is 2,3-bisphosphoglycerate-dependent phosphoglycerate mutase from Schistosoma mansoni (Blood fluke).